Reading from the N-terminus, the 203-residue chain is Chemotactic transduction protein ChpE (203 aa).

5 helical membrane passes run 3–23 (AIFL…GAVF), 46–66 (LIGD…LLGY), 69–89 (VRIP…VQGL), 123–143 (NVVY…GTPN), and 149–169 (VFFA…AALV).

It belongs to the Rht family.

The protein localises to the cell membrane. In Pseudomonas aeruginosa (strain ATCC 15692 / DSM 22644 / CIP 104116 / JCM 14847 / LMG 12228 / 1C / PRS 101 / PAO1), this protein is Chemotactic transduction protein ChpE (chpE).